A 227-amino-acid polypeptide reads, in one-letter code: Cytidylate kinase (227 aa).

7–15 (GPSGAGKGT) serves as a coordination point for ATP.

Belongs to the cytidylate kinase family. Type 1 subfamily.

The protein localises to the cytoplasm. The enzyme catalyses CMP + ATP = CDP + ADP. The catalysed reaction is dCMP + ATP = dCDP + ADP. This is Cytidylate kinase from Actinobacillus succinogenes (strain ATCC 55618 / DSM 22257 / CCUG 43843 / 130Z).